Reading from the N-terminus, the 120-residue chain is Large ribosomal subunit protein bL19c (120 aa).

It belongs to the bacterial ribosomal protein bL19 family.

It is found in the plastid. Its subcellular location is the chloroplast. The chain is Large ribosomal subunit protein bL19c from Phaeodactylum tricornutum (strain CCAP 1055/1).